The sequence spans 183 residues: Large ribosomal subunit protein uL6 (183 aa).

This sequence belongs to the universal ribosomal protein uL6 family. In terms of assembly, part of the 50S ribosomal subunit.

In terms of biological role, this protein binds to the 23S rRNA, and is important in its secondary structure. It is located near the subunit interface in the base of the L7/L12 stalk, and near the tRNA binding site of the peptidyltransferase center. In Chlamydia abortus (strain DSM 27085 / S26/3) (Chlamydophila abortus), this protein is Large ribosomal subunit protein uL6.